The following is a 362-amino-acid chain: tRNA-specific 2-thiouridylase MnmA (362 aa).

Residues 6-13 (AMSGGVDS) and Leu-32 each bind ATP. Residue Cys-101 is the Nucleophile of the active site. Cys-101 and Cys-197 are joined by a disulfide. Residue Gly-125 participates in ATP binding. Residues 147 to 149 (KDQ) form an interaction with tRNA region. The active-site Cysteine persulfide intermediate is Cys-197.

Belongs to the MnmA/TRMU family.

It localises to the cytoplasm. The enzyme catalyses S-sulfanyl-L-cysteinyl-[protein] + uridine(34) in tRNA + AH2 + ATP = 2-thiouridine(34) in tRNA + L-cysteinyl-[protein] + A + AMP + diphosphate + H(+). Its function is as follows. Catalyzes the 2-thiolation of uridine at the wobble position (U34) of tRNA, leading to the formation of s(2)U34. The protein is tRNA-specific 2-thiouridylase MnmA of Saccharopolyspora erythraea (strain ATCC 11635 / DSM 40517 / JCM 4748 / NBRC 13426 / NCIMB 8594 / NRRL 2338).